The chain runs to 228 residues: Lipoprotein-releasing system ATP-binding protein LolD (228 aa).

In terms of domain architecture, ABC transporter spans 5–228 (LRCHQVCKTY…DGLLTDITGA (224 aa)). 41 to 48 (GSSGSGKS) serves as a coordination point for ATP.

Belongs to the ABC transporter superfamily. Lipoprotein translocase (TC 3.A.1.125) family. In terms of assembly, the complex is composed of two ATP-binding proteins (LolD) and two transmembrane proteins (LolC and LolE).

The protein localises to the cell inner membrane. Functionally, part of the ABC transporter complex LolCDE involved in the translocation of mature outer membrane-directed lipoproteins, from the inner membrane to the periplasmic chaperone, LolA. Responsible for the formation of the LolA-lipoprotein complex in an ATP-dependent manner. This Vibrio cholerae serotype O1 (strain ATCC 39315 / El Tor Inaba N16961) protein is Lipoprotein-releasing system ATP-binding protein LolD.